We begin with the raw amino-acid sequence, 363 residues long: Pyruvate dehydrogenase E1 component subunit alpha, mitochondrial (363 aa).

Residues 1-2 (RN) constitute a mitochondrion transit peptide. Position 36 is an N6-acetyllysine; alternate (Lys36). Lys36 carries the N6-succinyllysine; alternate modification. Pyruvate contacts are provided by His65, Tyr91, Arg92, Ala130, Gly138, Val140, Asp169, Gly170, Ala171, Asn198, and Tyr200. Thiamine diphosphate-binding residues include Tyr91 and Arg92. Gly138, Val140, Asp169, Gly170, Ala171, and Asn198 together coordinate thiamine diphosphate. Asp169 provides a ligand contact to Mg(2+). The Mg(2+) site is built by Asn198 and Tyr200. At Ser205 the chain carries Phosphoserine; by PDK1. Lys217 is modified (N6-acetyllysine; alternate). Lys217 is modified (N6-succinyllysine; alternate). Lys240 is subject to N6-acetyllysine. Residue Lys250 is modified to N6-succinyllysine. Position 265 (His265) interacts with thiamine diphosphate. Ser266 is modified (phosphoserine; by PDK1, PDK2, PDK3 and PDK4). Ser268 is subject to Phosphoserine. Ser273 carries the post-translational modification Phosphoserine; by PDK1, PDK2, PDK3 and PDK4. At Tyr274 the chain carries Phosphotyrosine. The residue at position 286 (Lys286) is an N6-acetyllysine; alternate. Lys286 carries the N6-succinyllysine; alternate modification. Lys294 and Lys309 each carry N6-acetyllysine. Lys358 carries the post-translational modification N6-succinyllysine.

In terms of assembly, heterotetramer of two PDHA1 and two PDHB subunits. The heterotetramer interacts with DLAT, and is part of the multimeric pyruvate dehydrogenase complex that contains multiple copies of pyruvate dehydrogenase (E1), dihydrolipoamide acetyltransferase (DLAT, E2) and lipoamide dehydrogenase (DLD, E3). These subunits are bound to an inner core composed of about 48 DLAT and 12 PDHX molecules. The cofactor is thiamine diphosphate. Mg(2+) is required as a cofactor. Post-translationally, phosphorylation at Ser-205, Ser-266 and Ser-273 by PDK family kinases inactivates the enzyme; for this phosphorylation at a single site is sufficient. Phosphorylation at Ser-266 interferes with access to active site, and thereby inactivates the enzyme. Dephosphorylation at all three sites, i.e. at Ser-205, Ser-266 and Ser-273, is required for reactivation. Acetylation alters the phosphorylation pattern. Deacetylated by SIRT3.

It is found in the mitochondrion matrix. It carries out the reaction N(6)-[(R)-lipoyl]-L-lysyl-[protein] + pyruvate + H(+) = N(6)-[(R)-S(8)-acetyldihydrolipoyl]-L-lysyl-[protein] + CO2. Pyruvate dehydrogenase activity is inhibited by phosphorylation of PDHA1; it is reactivated by dephosphorylation. In terms of biological role, the pyruvate dehydrogenase complex catalyzes the overall conversion of pyruvate to acetyl-CoA and CO(2), and thereby links the glycolytic pathway to the tricarboxylic cycle. The sequence is that of Pyruvate dehydrogenase E1 component subunit alpha, mitochondrial (PDHA) from Sminthopsis macroura (Stripe-faced dunnart).